The sequence spans 439 residues: Deacetylvindoline O-acetyltransferase (439 aa).

The active-site Proton acceptor is histidine 158. Residues 317–344 (TKLVINELRKEKQKIKNLSREKLTYVAQ) are a coiled coil. Catalysis depends on aspartate 380, which acts as the Proton acceptor.

It belongs to the plant acyltransferase family. In terms of assembly, monomer. In terms of tissue distribution, predominantly expressed in young leaves of mature plants. Low expression in stems and flowers and not detected in roots. Confined to the laticifer and idioblast cells of leaves, stems, and flower buds.

The protein localises to the cytoplasm. The protein resides in the nucleus. The enzyme catalyses 4-O-deacetylvindoline + acetyl-CoA = vindoline + CoA. It participates in alkaloid biosynthesis; vindoline biosynthesis. Involved in the biosynthesis of vindoline, a precursor of vinblastine and vincristine. The protein is Deacetylvindoline O-acetyltransferase of Catharanthus roseus (Madagascar periwinkle).